A 304-amino-acid polypeptide reads, in one-letter code: Urease accessory protein UreD (304 aa).

It belongs to the UreD family. As to quaternary structure, ureD, UreF and UreG form a complex that acts as a GTP-hydrolysis-dependent molecular chaperone, activating the urease apoprotein by helping to assemble the nickel containing metallocenter of UreC. The UreE protein probably delivers the nickel.

Its subcellular location is the cytoplasm. Required for maturation of urease via the functional incorporation of the urease nickel metallocenter. In Haloquadratum walsbyi (strain DSM 16790 / HBSQ001), this protein is Urease accessory protein UreD.